Here is a 607-residue protein sequence, read N- to C-terminus: Autophagy-related protein 16-1 (607 aa).

Positions 13–43 (WKRHISEQLRRRDRLQRQAFEEIILQYNKLL) are interaction with ATG5. A coiled-coil region spans residues 78–230 (NDNQLQEMAQ…QKELAEAAKE (153 aa)). Phosphoserine; by CK2 is present on S139. Residues 207-230 (AENEKDSRRRQARLQKELAEAAKE) form a WIPI2-binding region. Positions 230-242 (EPLPVEQDDDIEV) are RB1CC1-binding. Phosphoserine occurs at positions 269 and 287. The Caspase cleavage signature appears at 296 to 299 (DNVD). WD repeat units lie at residues 320–359 (AHDG…CEFK), 364–403 (GSNA…LRHT), 406–445 (GHSG…CIKT), 447–484 (FAGS…IVRE), 486–525 (ELLG…IKQT), 532–573 (KCGS…KVLS), and 575–607 (QHSS…WAQY).

The protein belongs to the WD repeat ATG16 family. Homodimer. Homooligomer. Heterooligomer with ATG16L2. Interacts with WIPI1. Interacts with WIPI2. Interacts with RB1CC1; the interaction is required for ULK1 complex-dependent autophagy. Interacts with ATG5. Part of the minor complex composed of 4 sets of ATG12-ATG5 and ATG16L1 (400 kDa); this complex interacts with ATG3 leading to disruption of ATG7 interaction and promotion of ATG8-like proteins lipidation. Part of the major complex composed of 8 sets of ATG12-ATG5 and ATG16L1 (800 kDa). Interacts with RAB33B (GTP- and GDP-bound forms); the complex consists of a tetramer where two RAB33B molecules bind independently one molecule of the ATG16L1 homodimer; the interaction promotes ATG12-ATG5-ATG16L1 complex recruitment to phagophores. Interacts (via WD repeats) with TMEM59; the interaction mediates unconventional autophagic activity of TMEM59. Interacts with TLR2. Interacts (via WD repeats) with MEFV. Interacts with PPP1CA; the interaction dephosphorylates ATG16L1 causing dissociation of ATG12-ATG5-ATG16L1 complex. Interacts (via N-terminal) with CLTC. Interacts with NOD1. Interacts with NOD2. Interacts with TUFM. Interacts with TRIM16. Interacts (via WD repeats) with SPATA33. Interacts with IRGM. Proteolytic cleavage by activated CASP3 leads to degradation and may regulate autophagy upon cellular stress and apoptotic stimuli. Post-translationally, phosphorylation at Ser-139 promotes association with the ATG12-ATG5 conjugate to form the ATG12-ATG5-ATG16L1 complex.

It localises to the cytoplasm. The protein localises to the preautophagosomal structure membrane. The protein resides in the endosome membrane. Its subcellular location is the lysosome membrane. Functionally, plays an essential role in both canonical and non-canonical autophagy: interacts with ATG12-ATG5 to mediate the lipidation to ATG8 family proteins (MAP1LC3A, MAP1LC3B, MAP1LC3C, GABARAPL1, GABARAPL2 and GABARAP). Acts as a molecular hub, coordinating autophagy pathways via distinct domains that support either canonical or non-canonical signaling. During canonical autophagy, interacts with ATG12-ATG5 to mediate the conjugation of phosphatidylethanolamine (PE) to ATG8 proteins, to produce a membrane-bound activated form of ATG8. Thereby, controls the elongation of the nascent autophagosomal membrane. As part of the ATG8 conjugation system with ATG5 and ATG12, required for recruitment of LRRK2 to stressed lysosomes and induction of LRRK2 kinase activity in response to lysosomal stress. Also involved in non-canonical autophagy, a parallel pathway involving conjugation of ATG8 proteins to single membranes at endolysosomal compartments, probably by catalyzing conjugation of phosphatidylserine (PS) to ATG8. Non-canonical autophagy plays a key role in epithelial cells to limit lethal infection by influenza A (IAV) virus. Regulates mitochondrial antiviral signaling (MAVS)-dependent type I interferon (IFN-I) production. Negatively regulates NOD1- and NOD2-driven inflammatory cytokine response. Instead, promotes an autophagy-dependent antibacterial pathway together with NOD1 or NOD2. Plays a role in regulating morphology and function of Paneth cell. The chain is Autophagy-related protein 16-1 from Homo sapiens (Human).